Reading from the N-terminus, the 249-residue chain is Ribosomal RNA small subunit methyltransferase J (249 aa).

S-adenosyl-L-methionine contacts are provided by residues 99–100 (RD), 115–116 (ER), 151–152 (SS), and Asp-169.

It belongs to the methyltransferase superfamily. RsmJ family.

The protein resides in the cytoplasm. It carries out the reaction guanosine(1516) in 16S rRNA + S-adenosyl-L-methionine = N(2)-methylguanosine(1516) in 16S rRNA + S-adenosyl-L-homocysteine + H(+). Specifically methylates the guanosine in position 1516 of 16S rRNA. The protein is Ribosomal RNA small subunit methyltransferase J of Shewanella oneidensis (strain ATCC 700550 / JCM 31522 / CIP 106686 / LMG 19005 / NCIMB 14063 / MR-1).